The sequence spans 699 residues: tRNA 5-methylaminomethyl-2-thiouridine biosynthesis bifunctional protein MnmC (699 aa).

The segment at 1–247 is tRNA (mnm(5)s(2)U34)-methyltransferase; it reads MPAVSRPLPP…KREMLCGEIA (247 aa). The FAD-dependent cmnm(5)s(2)U34 oxidoreductase stretch occupies residues 275 to 699; sequence IGAGLAGTSV…QPSPTTTETP (425 aa). Residues 675 to 699 form a disordered region; it reads RGNATLSTSSPNDDAQPSPTTTETP.

This sequence in the N-terminal section; belongs to the methyltransferase superfamily. tRNA (mnm(5)s(2)U34)-methyltransferase family. In the C-terminal section; belongs to the DAO family. FAD is required as a cofactor.

It is found in the cytoplasm. It carries out the reaction 5-aminomethyl-2-thiouridine(34) in tRNA + S-adenosyl-L-methionine = 5-methylaminomethyl-2-thiouridine(34) in tRNA + S-adenosyl-L-homocysteine + H(+). Its function is as follows. Catalyzes the last two steps in the biosynthesis of 5-methylaminomethyl-2-thiouridine (mnm(5)s(2)U) at the wobble position (U34) in tRNA. Catalyzes the FAD-dependent demodification of cmnm(5)s(2)U34 to nm(5)s(2)U34, followed by the transfer of a methyl group from S-adenosyl-L-methionine to nm(5)s(2)U34, to form mnm(5)s(2)U34. This chain is tRNA 5-methylaminomethyl-2-thiouridine biosynthesis bifunctional protein MnmC, found in Chromohalobacter salexigens (strain ATCC BAA-138 / DSM 3043 / CIP 106854 / NCIMB 13768 / 1H11).